We begin with the raw amino-acid sequence, 344 residues long: Trace amine-associated receptor 8c (344 aa).

At 1–31 (MTSNFSQPALQLCYENTNGSCIKTPYSPGPR) the chain is on the extracellular side. N-linked (GlcNAc...) asparagine glycans are attached at residues asparagine 4 and asparagine 18. Cystine bridges form between cysteine 21–cysteine 185 and cysteine 104–cysteine 189. The chain crosses the membrane as a helical span at residues 32-52 (VILYMVYGFGAVLAVCGNLLV). At 53-67 (VISVLHFKQLHSPAN) the chain is on the cytoplasmic side. A helical membrane pass occupies residues 68-88 (FLIASLASADFLVGISVMPFS). Residues 89-111 (MVRSIESCWYFGDAFCSLHSCCD) are Extracellular-facing. A helical transmembrane segment spans residues 112–132 (VAFCYSSALHLCFISVDRYIA). Residues 133 to 146 (VTDPLVYPTKFTVS) lie on the Cytoplasmic side of the membrane. The chain crosses the membrane as a helical span at residues 147–167 (VSGICISISWILPLVYSSAVF). Residues 168–195 (YTGISAKGIESLVSALNCVGGCQVVVNQ) are Extracellular-facing. Residues 196 to 216 (DWVLISFLLFFIPTVVMIILY) traverse the membrane as a helical segment. Topologically, residues 217–260 (SKIFLVAKQQAVKIETSVSGNRGESSSESHKARVAKRERKAAKT) are cytoplasmic. Residues 261–281 (LGVTVVAFMVSWLPYTIDALV) traverse the membrane as a helical segment. A topological domain (extracellular) is located at residue aspartate 282. Residues 283–303 (AFMGFITPAYVYEICCWSAYY) form a helical membrane-spanning segment. Residues 304–344 (NSAMNPLIYAFFYPWFRKAIKLILSGKILKGHSSTTNLFSE) are Cytoplasmic-facing.

It belongs to the G-protein coupled receptor 1 family. Specifically expressed in neurons of the olfactory epithelium.

It is found in the cell membrane. Its function is as follows. Olfactory receptor specific for trace amines, such ascyclohexylamine (1-MPD). Trace amine compounds are enriched in animal body fluids and act on trace amine-associated receptors (TAARs) to elicit both intraspecific and interspecific innate behaviors. Ligand-binding causes a conformation change that triggers signaling via G(s)-class of G alpha proteins (GNAL or GNAS). The chain is Trace amine-associated receptor 8c from Mus musculus (Mouse).